Consider the following 311-residue polypeptide: Elongation factor Ts (311 aa).

Residues 81 to 84 (TDFV) are involved in Mg(2+) ion dislocation from EF-Tu.

It belongs to the EF-Ts family.

The protein resides in the cytoplasm. Functionally, associates with the EF-Tu.GDP complex and induces the exchange of GDP to GTP. It remains bound to the aminoacyl-tRNA.EF-Tu.GTP complex up to the GTP hydrolysis stage on the ribosome. This Trichlorobacter lovleyi (strain ATCC BAA-1151 / DSM 17278 / SZ) (Geobacter lovleyi) protein is Elongation factor Ts.